We begin with the raw amino-acid sequence, 708 residues long: Tryptophan synthase (708 aa).

Residues methionine 1–alanine 305 form a tryptophan synthase alpha chain region. Catalysis depends on proton acceptor residues glutamate 49 and aspartate 60. The segment at leucine 306–phenylalanine 708 is tryptophan synthase beta chain. At lysine 392 the chain carries N6-(pyridoxal phosphate)lysine.

It in the N-terminal section; belongs to the TrpA family. In the C-terminal section; belongs to the TrpB family. Pyridoxal 5'-phosphate is required as a cofactor.

The enzyme catalyses (1S,2R)-1-C-(indol-3-yl)glycerol 3-phosphate + L-serine = D-glyceraldehyde 3-phosphate + L-tryptophan + H2O. The protein operates within amino-acid biosynthesis; L-tryptophan biosynthesis; L-tryptophan from chorismate: step 5/5. This Neurospora crassa (strain ATCC 24698 / 74-OR23-1A / CBS 708.71 / DSM 1257 / FGSC 987) protein is Tryptophan synthase (trp-3).